Reading from the N-terminus, the 727-residue chain is Catalase-peroxidase (727 aa).

Residues 1–26 are disordered; the sequence is MSDEKKCPVTGRTSSQVAGSGTSNKD. Polar residues predominate over residues 11-26; it reads GRTSSQVAGSGTSNKD. Residues 96-219 constitute a cross-link (tryptophyl-tyrosyl-methioninium (Trp-Tyr) (with M-245)); it reads WHSAGTYRIG…LAAVQMGLIY (124 aa). His97 functions as the Proton acceptor in the catalytic mechanism. The segment at residues 219-245 is a cross-link (tryptophyl-tyrosyl-methioninium (Tyr-Met) (with W-96)); sequence YVNPEGPNGDPNAVASGKDVRETFARM. His260 is a heme b binding site. A compositionally biased stretch (basic and acidic residues) spans 346 to 362; that stretch reads SDPEAKKAVPDAHDPSK. The disordered stretch occupies residues 346–365; sequence SDPEAKKAVPDAHDPSKTHP.

Belongs to the peroxidase family. Peroxidase/catalase subfamily. As to quaternary structure, homodimer or homotetramer. Heme b is required as a cofactor. Formation of the three residue Trp-Tyr-Met cross-link is important for the catalase, but not the peroxidase activity of the enzyme.

It carries out the reaction H2O2 + AH2 = A + 2 H2O. The catalysed reaction is 2 H2O2 = O2 + 2 H2O. Its function is as follows. Bifunctional enzyme with both catalase and broad-spectrum peroxidase activity. This chain is Catalase-peroxidase, found in Maridesulfovibrio salexigens (strain ATCC 14822 / DSM 2638 / NCIMB 8403 / VKM B-1763) (Desulfovibrio salexigens).